Consider the following 968-residue polypeptide: MMDFLKRFFGSSQERILKRFQKLVEEVNACDEKFSSLSDDELREKTPQLKRRYQEGESLDKLLPEAYGIVKNVCRRLAGTPVEVSGYHQQWDMVPYDVQILGGIAMHKGFITEMQTGEGKTLTAVMPLYLNALTGKPVHLVTVNDYLAQRDCEWVGSVLRWLGLTTGVLVSGIPPERRKAIYQCDVVYGTASEFGFDYLRDNSIATRKEEQVGRGFYFAIIDEVDSVLIDEARTPLIISGPGEKHNPVYFELKDKVAELVHFQREMCNHIAAEARKTLDPFLGMDVLPKDRKIMEGISEACRALWLVSKGMPLNRVLRRVREHPDLRAMVDKWDVFYHAEQNKEECLERLSSLYIVVDEHNNDFELTDKGMQQWIEKIGGAAEDFVMMDMGHEYALIEEDTTLSPEDKLNRKIAVSEKDTQRKARAHGLRQLLRAHLLMERDIDYIVRDDQIVIIDEHTGRPQAGRRFSEGLHQAIEAKEHVTIRKESQTFATVTLQNFFRLYEKLAGMTGTAITESREFKEIYNLYVLQVPTFKPCLRIDHNDAFYMTEREKYQAIVAEIISAHRSGKPILIGTESVEVSEKLSRILRQNRIHHTVLNAKNHAQEAEIIAGAGKVGAVTVATNMAGRGTDIKLDKEAVAAGGLYVIGTSRHQSRRIDRQLRGRCARLGDPGAAKFFLSFEDRLMRLFASPKLNTLIRHFRPPEGEAMSDPMFDRLIETAQKRVEGRNYTIRKHTLEYDDVMNKQRQTIYAFRNDVLHADDLFIVAREQIEHVSLALAFLILKDARADHCSLPKVEEWLSYSFPVKLDDQEIRRLGNVDAVADYIGGLLIEAFDAKFSSMLTEFTEIIGSASGAQGVCNDILRSVIISHIDEEWKVHLMDMDLLRSEVGLRSVGQKDPLIEFKNESFLLFEGLIRDIRIAIVKHLFALELSLTRSDRPDNAIPTVATAFHNHDNFRPMELTIIGEEEN.

ATP-binding positions include glutamine 99, 117–121 (GEGKT), and aspartate 631.

It belongs to the SecA family. In terms of assembly, monomer and homodimer. Part of the essential Sec protein translocation apparatus which comprises SecA, SecYEG and auxiliary proteins SecDF. Other proteins may also be involved.

It localises to the cell inner membrane. It is found in the cytoplasm. The enzyme catalyses ATP + H2O + cellular proteinSide 1 = ADP + phosphate + cellular proteinSide 2.. Its function is as follows. Part of the Sec protein translocase complex. Interacts with the SecYEG preprotein conducting channel. Has a central role in coupling the hydrolysis of ATP to the transfer of proteins into and across the cell membrane, serving as an ATP-driven molecular motor driving the stepwise translocation of polypeptide chains across the membrane. The sequence is that of Protein translocase subunit SecA from Chlamydia muridarum (strain MoPn / Nigg).